The sequence spans 270 residues: tRNA pseudouridine synthase A (270 aa).

The active-site Nucleophile is Asp60. Substrate is bound at residue Tyr118.

This sequence belongs to the tRNA pseudouridine synthase TruA family. In terms of assembly, homodimer.

The enzyme catalyses uridine(38/39/40) in tRNA = pseudouridine(38/39/40) in tRNA. Its function is as follows. Formation of pseudouridine at positions 38, 39 and 40 in the anticodon stem and loop of transfer RNAs. This is tRNA pseudouridine synthase A from Salmonella arizonae (strain ATCC BAA-731 / CDC346-86 / RSK2980).